A 437-amino-acid chain; its full sequence is Double-stranded RNA-binding protein 3 (437 aa).

The disordered stretch occupies residues 1–22 (MKKKSAPTPLPPETANTSPAPI). 2 DRBM domains span residues 35–104 (VFKS…EIVK) and 120–187 (LCKN…AIQG). Composition is skewed to basic and acidic residues over residues 288–310 (AKRV…ENQH) and 320–330 (DEARVEQEPSR). The tract at residues 288–331 (AKRVEDEPPRDIEMVQPDKENQHSDAALVQPDDEARVEQEPSRD) is disordered.

Functionally, binds double-stranded RNA. The polypeptide is Double-stranded RNA-binding protein 3 (DRB3) (Oryza sativa subsp. japonica (Rice)).